Here is a 146-residue protein sequence, read N- to C-terminus: Late protein OPG112 (146 aa).

Residues 10–32 (LAMTAFFGELSTLDIMALIMSIF) form a helical membrane-spanning segment.

It belongs to the orthopoxvirus OPG112 family.

It localises to the host membrane. The protein resides in the host cytoplasm. Contributes to the formation of crescents and immature virions (IV). Interacts with phosphatidylinositol-3-phosphate (PI3P) and phosphatidylinositol-4-phosphate (PI4P) lipids in order to form virion membranes. Mechanistically, mediates proper formation of OPG125-hexamers, and hence the honey comb lattice and spherical immature virus. The polypeptide is Late protein OPG112 (OPG112) (Bos taurus (Bovine)).